Consider the following 351-residue polypeptide: Methylthioribose-1-phosphate isomerase (351 aa).

Residues 51–53 (RGA), R94, and Q199 contribute to the substrate site. Residue D240 is the Proton donor of the active site. 250-251 (NK) contributes to the substrate binding site.

The protein belongs to the EIF-2B alpha/beta/delta subunits family. MtnA subfamily. In terms of assembly, homodimer.

The catalysed reaction is 5-(methylsulfanyl)-alpha-D-ribose 1-phosphate = 5-(methylsulfanyl)-D-ribulose 1-phosphate. It functions in the pathway amino-acid biosynthesis; L-methionine biosynthesis via salvage pathway; L-methionine from S-methyl-5-thio-alpha-D-ribose 1-phosphate: step 1/6. Catalyzes the interconversion of methylthioribose-1-phosphate (MTR-1-P) into methylthioribulose-1-phosphate (MTRu-1-P). This Bacillus anthracis protein is Methylthioribose-1-phosphate isomerase.